The primary structure comprises 250 residues: Snake venom serine protease pictobin (250 aa).

Positions 1-11 are cleaved as a signal peptide; the sequence is ANLLILQVSYA. Positions 12 to 17 are excised as a propeptide; the sequence is QKSSEL. The region spanning 18–241 is the Peptidase S1 domain; that stretch reads VIGGDECNIN…HLHWILSIIA (224 aa). 5 cysteine pairs are disulfide-bonded: C24–C155, C42–C58, C134–C202, C166–C181, and C192–C217. H57 functions as the Charge relay system in the catalytic mechanism. N71 and N95 each carry an N-linked (GlcNAc...) asparagine glycan. Residue D102 is the Charge relay system of the active site. Residues N146 and N162 are each glycosylated (N-linked (GlcNAc...) asparagine). S196 acts as the Charge relay system in catalysis. N-linked (GlcNAc...) asparagine glycosylation is present at N243.

The protein belongs to the peptidase S1 family. Snake venom subfamily. Monomer. Expressed by the venom gland.

It localises to the secreted. Functionally, snake venom serine protease that may impair the hemostatic system of the prey. The polypeptide is Snake venom serine protease pictobin (Bothrops pictus (Desert lancehead)).